The sequence spans 1001 residues: MPSTSRAGSLKDPDVAELFFRDDPEKLFSDLREIGHGSFGAVYFAHDARTSEVVAIKKMSYSGKQSNEKWQDIIKEVKFLQRIQHPNSIEYKGCYLREHTAWLVMEYCLGSASDLLEVHKKPLQEIEIAAITHGALQGLAYLHSHNLIHRDIKAGNILLTEPGQVKLADFGSASIVSPANSFVGTPYWMAPEVILAMDEGQYDGKVDVWSLGITCVELAERKPPLFNMNAMSALYHIAQNESPTLQSTEWSDYFRNFVDSCLHKIPQDRPTSDELLKHMFVLRERPETVLIDLIQRTKDAVRELDNLQYRKMKKLLFQEAHNGPAVETQEEDEEQEHGVGRTGTVNSIGSNQSIPSMSISASSQSSSVNSLPDASDDKSELDMMEGDHTVMSNSSVIHLKPEEENYPEEPDPRTRPSEPQSPPQVSRHKSHYRNREHFATIRTASLVTRQIQEHEQDSELREQMSGYKRMRRQHQKQLMALENKLKAEMDEHRLRLDKDLETQRNNFAAEIEKLVKKHQAAMEKELKLMANEEKKFQQHIQAQQKKELNSFLESQKREYKLRKEQLKEELNENQSTPKKEKQEWLSKQKENFQHFQAEEEANLLRRQRQYLELECRRFKRRMLLSRHNLEQDLVREELNKRQTQKDLEHAMLLRQHESMQELEFRHLNTIQRMRCELIKLQHQTELTNQLEYNKRRERELRRKHVMEVRQQPKSLKSKELQIKKQFQDTCKIQTRQYKALRNHLLKSTPKNEHKAVLKRLKEEQTRKLAILAEQYDHSINEMLSTQALRLDEAQEAECQVLKMQLQQELELLNAYQSKIKMQAEAQHEREIRELEQRVSLRRALLEQKIEEEMLALQNERTERIRSLLERQAREIEAFDSESMRLGFSNMILSNLSPEAFSHSYPGASGWSHNPTGGPGPHWGHPMAGPPQAWGHPMQGGPQPWGHPSGSVQGVSRGSTMGVRNSPQALRRTASGGRTEQGMSRSTSVTSQISNGSHMSYT.

Residues 28-281 (FSDLREIGHG…SDELLKHMFV (254 aa)) enclose the Protein kinase domain. Residues 34-42 (IGHGSFGAV) and lysine 57 contribute to the ATP site. The active-site Proton acceptor is aspartate 151. Disordered regions lie at residues 324-435 (PAVE…YRNR) and 567-586 (KEEL…EWLS). Residues 350 to 370 (SNQSIPSMSISASSQSSSVNS) are compositionally biased toward low complexity. Basic and acidic residues-rich tracts occupy residues 375–388 (SDDK…EGDH) and 577–586 (PKKEKQEWLS). Coiled-coil stretches lie at residues 458–651 (SELR…EHAM) and 754–877 (KAVL…EIEA). The interval 911–1001 (SHNPTGGPGP…ISNGSHMSYT (91 aa)) is disordered. Positions 921-930 (HWGHPMAGPP) are enriched in low complexity. Composition is skewed to polar residues over residues 949-967 (GSVQ…NSPQ) and 975-1001 (GGRT…MSYT).

It belongs to the protein kinase superfamily. STE Ser/Thr protein kinase family. STE20 subfamily.

The protein resides in the cytoplasm. It catalyses the reaction L-seryl-[protein] + ATP = O-phospho-L-seryl-[protein] + ADP + H(+). The catalysed reaction is L-threonyl-[protein] + ATP = O-phospho-L-threonyl-[protein] + ADP + H(+). In terms of biological role, serine/threonine-protein kinase involved in various processes such as p38/mapk14 stress-activated MAPK cascade, DNA damage response and regulation of cytoskeleton stability. Acts as an activator of the p38/MAPK14 stress-activated MAPK cascade by mediating phosphorylation and subsequent activation of upstream MAP kinase kinases. In response to DNA damage, involved in the G2/M transition DNA damage checkpoint by activating the p38/MAPK14 stress-activated MAPK cascade. This Xenopus laevis (African clawed frog) protein is Serine/threonine-protein kinase TAO1-B (taok1-b).